The following is a 353-amino-acid chain: Phospho-N-acetylmuramoyl-pentapeptide-transferase (353 aa).

A run of 10 helical transmembrane segments spans residues 22–42, 65–85, 88–108, 129–149, 161–181, 192–212, 228–248, 256–276, 281–301, and 330–350; these read FAFF…ITWA, TPTM…LFCI, DNIF…IGLI, LLAQ…SSEL, PLFD…ISSS, GLAT…LYLS, GLGE…GFLW, VFMG…LAII, ILLL…ILQV, and KIIV…LASI.

It belongs to the glycosyltransferase 4 family. MraY subfamily. Mg(2+) is required as a cofactor.

It is found in the cell inner membrane. It carries out the reaction UDP-N-acetyl-alpha-D-muramoyl-L-alanyl-gamma-D-glutamyl-meso-2,6-diaminopimeloyl-D-alanyl-D-alanine + di-trans,octa-cis-undecaprenyl phosphate = di-trans,octa-cis-undecaprenyl diphospho-N-acetyl-alpha-D-muramoyl-L-alanyl-D-glutamyl-meso-2,6-diaminopimeloyl-D-alanyl-D-alanine + UMP. It participates in cell wall biogenesis; peptidoglycan biosynthesis. Catalyzes the initial step of the lipid cycle reactions in the biosynthesis of the cell wall peptidoglycan: transfers peptidoglycan precursor phospho-MurNAc-pentapeptide from UDP-MurNAc-pentapeptide onto the lipid carrier undecaprenyl phosphate, yielding undecaprenyl-pyrophosphoryl-MurNAc-pentapeptide, known as lipid I. This Campylobacter jejuni subsp. jejuni serotype O:6 (strain 81116 / NCTC 11828) protein is Phospho-N-acetylmuramoyl-pentapeptide-transferase.